Reading from the N-terminus, the 283-residue chain is Non-selective voltage-gated ion channel VDAC3 (283 aa).

Cysteine 2 bears the N-acetylcysteine mark. Threonine 4 bears the Phosphothreonine mark. An N6-acetyllysine mark is found at lysine 12, lysine 15, and lysine 20. Beta stranded transmembrane passes span 26 to 35 (MVKIDLRTKS) and 39 to 47 (VEFSTSGHA). Residue lysine 53 forms a Glycyl lysine isopeptide (Lys-Gly) (interchain with G-Cter in ubiquitin) linkage. The next 3 membrane-spanning stretches (beta stranded) occupy residues 54–64 (ASGNLETKYKI), 69–76 (LTFTQKWN), and 80–89 (TLGTEISLEN). Lysine 90 is modified (N6-acetyllysine). A beta stranded membrane pass occupies residues 95–104 (LKLTLDTIFV). Residues lysine 109 and lysine 110 each participate in a glycyl lysine isopeptide (Lys-Gly) (interchain with G-Cter in ubiquitin) cross-link. A run of 10 beta stranded transmembrane segments spans residues 111-120 (SGKLKASYKR), 123-130 (FSIGSNVD), 137-145 (TIYGWAVLA), 150-158 (LAGYQMSFD), 163-175 (KLSQ…GYKA), 178-185 (FQLHTHVN), 189-198 (EFGGSIYQKV), 202-211 (IETSINLAWT), 218-227 (RFGIAAKYKL), and 231-238 (TSLSAKVN). A Phosphoserine modification is found at serine 241. Residues 242 to 244 (LIG) and 260 to 264 (SALID) each bind NAD(+). Transmembrane regions (beta stranded) follow at residues 242-251 (LIGLGYTQTL) and 254-263 (GVKLTLSALI). Lysine 266 is subject to N6-acetyllysine; alternate. Lysine 266 participates in a covalent cross-link: Glycyl lysine isopeptide (Lys-Gly) (interchain with G-Cter in ubiquitin); alternate. A beta stranded transmembrane segment spans residues 273–282 (HKVGLGFELE).

This sequence belongs to the eukaryotic mitochondrial porin family. Interacts with ARMC12 in a TBC1D21-dependent manner. Interacts with MISFA. In terms of processing, ubiquitinated by PRKN during mitophagy, leading to its degradation and enhancement of mitophagy. Deubiquitinated by USP30.

It is found in the mitochondrion outer membrane. The protein localises to the membrane. The enzyme catalyses chloride(in) = chloride(out). It carries out the reaction K(+)(in) = K(+)(out). Its function is as follows. Non-selective voltage-gated ion channel that mediates the transport of anions and cations through the mitochondrion outer membrane and plasma membrane. Forms a high-conducting channel with a stable open state and a voltage-induced closure with a mild preference for anions over cations. Involved in male fertility and sperm mitochondrial sheath formation. This Sus scrofa (Pig) protein is Non-selective voltage-gated ion channel VDAC3.